The following is a 436-amino-acid chain: GTPase Der (436 aa).

2 consecutive EngA-type G domains span residues 4 to 167 (PTIA…PNTS) and 175 to 351 (IKFS…MNQN). GTP contacts are provided by residues 10–17 (GRPNVGKS), 57–61 (DTGGI), 119–122 (NKVD), 181–188 (GRPNVGKS), 229–233 (DTAGM), and 294–297 (NKWD). In terms of domain architecture, KH-like spans 352–436 (LRIPSALLND…PIKIIPRRRK (85 aa)).

It belongs to the TRAFAC class TrmE-Era-EngA-EngB-Septin-like GTPase superfamily. EngA (Der) GTPase family. Associates with the 50S ribosomal subunit.

Its function is as follows. GTPase that plays an essential role in the late steps of ribosome biogenesis. This Enterococcus faecalis (strain ATCC 700802 / V583) protein is GTPase Der.